Consider the following 883-residue polypeptide: 3-hydroxy-3-methylglutaryl-coenzyme A reductase (883 aa).

Residues 1–9 (MLSRLFRMH) lie on the Cytoplasmic side of the membrane. Residues 10–39 (GQFVASHPWEVIVGTVTLTICMMSMNMFTG) traverse the membrane as a helical segment. Topologically, residues 40–56 (NDKICGWNYACPKFEED) are lumenal. A helical membrane pass occupies residues 57–78 (VLSSDIIILTITRCIAILYIYF). Over 79-89 (QFQNLRQLGSK) the chain is Cytoplasmic. Residues 90 to 114 (YILGIAGLFTIFSSFVFSTVVIHFL) form a helical membrane-spanning segment. The Lumenal portion of the chain corresponds to 115 to 123 (DKELTGLNE). The chain crosses the membrane as a helical span at residues 124 to 149 (ALPFFLLLIDLSKASALAKFALSSNS). Topologically, residues 150–159 (QDEVRDNIAR) are cytoplasmic. A helical transmembrane segment spans residues 160-187 (GMAILGPTFTLEALVECLVIGVGTMSGV). Residues 188 to 191 (RQLE) lie on the Lumenal side of the membrane. Residues 192–220 (IMCCFGCMSVLANYFAFMTFFPACVSLVL) traverse the membrane as a helical segment. Over 221 to 249 (ELSRESREGRPIWQLSQFASVLEEEEDNK) the chain is Cytoplasmic. A helical membrane pass occupies residues 250–276 (PNPVTQRVKMIMSLGLVLVHAHSRWIS). The Lumenal portion of the chain corresponds to 277-316 (EPSSQNSTSISDHEVTTMLDDMMPKRVEPSMPLWQFYLSR). N-linked (GlcNAc...) asparagine glycosylation occurs at asparagine 282. The helical transmembrane segment at 317 to 341 (MVTMDVEQIITLGLALLLAVKYIFF) threads the bilayer. Topologically, residues 342–883 (EQTETESTFS…LPGTCTKKAA (542 aa)) are cytoplasmic. The tract at residues 373 to 396 (REPEQEKTVHVSTTEEASSKEETE) is disordered. Residues glutamate 554, lysine 686, and aspartate 762 each act as charge relay system in the active site. Catalysis depends on histidine 861, which acts as the Proton donor.

Belongs to the HMG-CoA reductase family. In terms of assembly, homotetramer. Homodimer.

It localises to the endoplasmic reticulum membrane. It is found in the peroxisome membrane. It catalyses the reaction (R)-mevalonate + 2 NADP(+) + CoA = (3S)-3-hydroxy-3-methylglutaryl-CoA + 2 NADPH + 2 H(+). It participates in metabolic intermediate biosynthesis; (R)-mevalonate biosynthesis; (R)-mevalonate from acetyl-CoA: step 3/3. Functionally, catalyzes the conversion of (3S)-hydroxy-3-methylglutaryl-CoA (HMG-CoA) to mevalonic acid, the rate-limiting step in the synthesis of cholesterol and other isoprenoids, thus plays a critical role in cellular cholesterol homeostasis. This is 3-hydroxy-3-methylglutaryl-coenzyme A reductase (hmgcr) from Xenopus laevis (African clawed frog).